Reading from the N-terminus, the 298-residue chain is Ethanolamine ammonia-lyase small subunit (298 aa).

Positions 210, 231, and 261 each coordinate adenosylcob(III)alamin.

It belongs to the EutC family. The basic unit is a heterodimer which dimerizes to form tetramers. The heterotetramers trimerize; 6 large subunits form a core ring with 6 small subunits projecting outwards. The cofactor is adenosylcob(III)alamin.

Its subcellular location is the bacterial microcompartment. It catalyses the reaction ethanolamine = acetaldehyde + NH4(+). The protein operates within amine and polyamine degradation; ethanolamine degradation. In terms of biological role, catalyzes the deamination of various vicinal amino-alcohols to oxo compounds. Allows this organism to utilize ethanolamine as the sole source of nitrogen and carbon in the presence of external vitamin B12. In Salmonella typhi, this protein is Ethanolamine ammonia-lyase small subunit.